A 185-amino-acid chain; its full sequence is Acireductone dioxygenase (185 aa).

Residues His96, His98, Glu102, and His140 each coordinate Fe(2+). Ni(2+)-binding residues include His96, His98, Glu102, and His140.

Belongs to the acireductone dioxygenase (ARD) family. Monomer. Requires Fe(2+) as cofactor. Ni(2+) is required as a cofactor.

It carries out the reaction 1,2-dihydroxy-5-(methylsulfanyl)pent-1-en-3-one + O2 = 3-(methylsulfanyl)propanoate + CO + formate + 2 H(+). The catalysed reaction is 1,2-dihydroxy-5-(methylsulfanyl)pent-1-en-3-one + O2 = 4-methylsulfanyl-2-oxobutanoate + formate + 2 H(+). The protein operates within amino-acid biosynthesis; L-methionine biosynthesis via salvage pathway; L-methionine from S-methyl-5-thio-alpha-D-ribose 1-phosphate: step 5/6. Functionally, catalyzes 2 different reactions between oxygen and the acireductone 1,2-dihydroxy-3-keto-5-methylthiopentene (DHK-MTPene) depending upon the metal bound in the active site. Fe-containing acireductone dioxygenase (Fe-ARD) produces formate and 2-keto-4-methylthiobutyrate (KMTB), the alpha-ketoacid precursor of methionine in the methionine recycle pathway. Ni-containing acireductone dioxygenase (Ni-ARD) produces methylthiopropionate, carbon monoxide and formate, and does not lie on the methionine recycle pathway. This Hahella chejuensis (strain KCTC 2396) protein is Acireductone dioxygenase.